A 259-amino-acid polypeptide reads, in one-letter code: MTILDDILVKTRQVIARDQASVPAAELVAAAKDLPVCRDFHGSLAATDQVRLIAEVKRASPSAGLIREDFDPPTIAKSYEDGGAACISVLTDEPFFQGSLDYLRQVRSAVDLPILRKDFIVDPYQLLQARVAGADAVLLIAECLSPQQLIEMDEQASELGLQTLIELYEPENLAPVLATKTRLVGINNRDLRTFETDLQHCVRLAADIPSDRLVVGESGIRTAADVAMLKAGGIKAILVGESLMRQPDITIATKALLAS.

The protein belongs to the TrpC family.

The catalysed reaction is 1-(2-carboxyphenylamino)-1-deoxy-D-ribulose 5-phosphate + H(+) = (1S,2R)-1-C-(indol-3-yl)glycerol 3-phosphate + CO2 + H2O. The protein operates within amino-acid biosynthesis; L-tryptophan biosynthesis; L-tryptophan from chorismate: step 4/5. This chain is Indole-3-glycerol phosphate synthase, found in Rhodopirellula baltica (strain DSM 10527 / NCIMB 13988 / SH1).